The chain runs to 1400 residues: DNA-directed RNA polymerase subunit beta' (1400 aa).

Cys-71, Cys-73, Cys-86, and Cys-89 together coordinate Zn(2+). Positions 462, 464, and 466 each coordinate Mg(2+). Residues Cys-811, Cys-885, Cys-892, and Cys-895 each contribute to the Zn(2+) site.

It belongs to the RNA polymerase beta' chain family. The RNAP catalytic core consists of 2 alpha, 1 beta, 1 beta' and 1 omega subunit. When a sigma factor is associated with the core the holoenzyme is formed, which can initiate transcription. It depends on Mg(2+) as a cofactor. Zn(2+) is required as a cofactor.

The enzyme catalyses RNA(n) + a ribonucleoside 5'-triphosphate = RNA(n+1) + diphosphate. Functionally, DNA-dependent RNA polymerase catalyzes the transcription of DNA into RNA using the four ribonucleoside triphosphates as substrates. The sequence is that of DNA-directed RNA polymerase subunit beta' from Brucella abortus (strain S19).